A 246-amino-acid polypeptide reads, in one-letter code: Acetoacetate decarboxylase (246 aa).

The Schiff-base intermediate with acetoacetate role is filled by Lys115.

This sequence belongs to the ADC family.

It carries out the reaction acetoacetate + H(+) = acetone + CO2. Functionally, catalyzes the conversion of acetoacetate to acetone and carbon dioxide. This is Acetoacetate decarboxylase from Clostridium beijerinckii (strain ATCC 51743 / NCIMB 8052) (Clostridium acetobutylicum).